Here is a 110-residue protein sequence, read N- to C-terminus: DNA-directed RNA polymerase subunit omega (110 aa).

This sequence belongs to the RNA polymerase subunit omega family. In terms of assembly, the RNAP catalytic core consists of 2 alpha, 1 beta, 1 beta' and 1 omega subunit. When a sigma factor is associated with the core the holoenzyme is formed, which can initiate transcription.

It carries out the reaction RNA(n) + a ribonucleoside 5'-triphosphate = RNA(n+1) + diphosphate. Its function is as follows. Promotes RNA polymerase assembly. Latches the N- and C-terminal regions of the beta' subunit thereby facilitating its interaction with the beta and alpha subunits. The protein is DNA-directed RNA polymerase subunit omega (rpoZ) of Mycobacterium bovis (strain ATCC BAA-935 / AF2122/97).